Reading from the N-terminus, the 145-residue chain is Ribosomal RNA large subunit methyltransferase H (145 aa).

S-adenosyl-L-methionine contacts are provided by residues L64, G93, and 112-117 (LSPLTF).

The protein belongs to the RNA methyltransferase RlmH family. As to quaternary structure, homodimer.

It localises to the cytoplasm. The enzyme catalyses pseudouridine(1915) in 23S rRNA + S-adenosyl-L-methionine = N(3)-methylpseudouridine(1915) in 23S rRNA + S-adenosyl-L-homocysteine + H(+). In terms of biological role, specifically methylates the pseudouridine at position 1915 (m3Psi1915) in 23S rRNA. The polypeptide is Ribosomal RNA large subunit methyltransferase H (Prochlorococcus marinus (strain NATL2A)).